We begin with the raw amino-acid sequence, 213 residues long: Na(+)-translocating NADH-quinone reductase subunit D (213 aa).

Transmembrane regions (helical) follow at residues 21 to 41 (PLIA…VNTA), 42 to 62 (ITMG…VSLL), 69 to 86 (SVRM…VIVI), 101 to 121 (LSVF…AESL), 131 to 151 (FLDG…VSIV), and 183 to 203 (FGLM…IWGV).

It belongs to the NqrDE/RnfAE family. In terms of assembly, composed of six subunits; NqrA, NqrB, NqrC, NqrD, NqrE and NqrF.

The protein localises to the cell inner membrane. It carries out the reaction a ubiquinone + n Na(+)(in) + NADH + H(+) = a ubiquinol + n Na(+)(out) + NAD(+). Functionally, NQR complex catalyzes the reduction of ubiquinone-1 to ubiquinol by two successive reactions, coupled with the transport of Na(+) ions from the cytoplasm to the periplasm. NqrA to NqrE are probably involved in the second step, the conversion of ubisemiquinone to ubiquinol. This is Na(+)-translocating NADH-quinone reductase subunit D from Chlamydia caviae (strain ATCC VR-813 / DSM 19441 / 03DC25 / GPIC) (Chlamydophila caviae).